The following is a 266-amino-acid chain: Undecaprenyl-diphosphatase (266 aa).

Transmembrane regions (helical) follow at residues M3–V23, G41–Y61, V86–A106, L108–I128, F149–M171, A184–W204, I220–V240, and F245–A265.

Belongs to the UppP family.

Its subcellular location is the cell inner membrane. The catalysed reaction is di-trans,octa-cis-undecaprenyl diphosphate + H2O = di-trans,octa-cis-undecaprenyl phosphate + phosphate + H(+). Its function is as follows. Catalyzes the dephosphorylation of undecaprenyl diphosphate (UPP). Confers resistance to bacitracin. The protein is Undecaprenyl-diphosphatase of Rhizorhabdus wittichii (strain DSM 6014 / CCUG 31198 / JCM 15750 / NBRC 105917 / EY 4224 / RW1) (Sphingomonas wittichii).